Reading from the N-terminus, the 97-residue chain is Translation initiation factor 1A (97 aa).

The region spanning 8–82 (IRVRLPDRKK…DRADIVWRYT (75 aa)) is the S1-like domain.

This sequence belongs to the eIF-1A family.

In terms of biological role, seems to be required for maximal rate of protein biosynthesis. Enhances ribosome dissociation into subunits and stabilizes the binding of the initiator Met-tRNA(I) to 40 S ribosomal subunits. The polypeptide is Translation initiation factor 1A (eIF1A) (Archaeoglobus fulgidus (strain ATCC 49558 / DSM 4304 / JCM 9628 / NBRC 100126 / VC-16)).